A 270-amino-acid chain; its full sequence is Phosphate import ATP-binding protein PstB 1 (270 aa).

The 242-residue stretch at 24–265 (LAVERLNLFY…PYQRQTEDYI (242 aa)) folds into the ABC transporter domain. 56–63 (GPSGCGKS) is an ATP binding site.

This sequence belongs to the ABC transporter superfamily. Phosphate importer (TC 3.A.1.7) family. As to quaternary structure, the complex is composed of two ATP-binding proteins (PstB), two transmembrane proteins (PstC and PstA) and a solute-binding protein (PstS).

Its subcellular location is the cell inner membrane. The enzyme catalyses phosphate(out) + ATP + H2O = ADP + 2 phosphate(in) + H(+). Functionally, part of the ABC transporter complex PstSACB involved in phosphate import. Responsible for energy coupling to the transport system. This is Phosphate import ATP-binding protein PstB 1 from Yersinia pestis bv. Antiqua (strain Antiqua).